A 440-amino-acid chain; its full sequence is uncharacterized protein (440 aa).

10 consecutive transmembrane segments (helical) span residues 1–21 (MLLVNLAIFIAFLLLLAQLYR), 29–49 (TVFIGLLLGLLFGAVLQSAFE), 70–90 (LLQMIVMPLVFVSILSAIARI), 101–121 (VGVLSTLLITTAISAAIGIAM), 179–199 (TSIISVVIFSALLGVAALSLG), 226–246 (FVIRLTPYGVFALMIKMAATS), 258–278 (IVASYAAIALMFVVHGILLFF), 343–363 (IYPAMLAVMVAPMVGIDPFSF), 366–386 (ILTLIFVVAISSFGIAGVGGG), and 389–409 (FAAIVVLSTLGLPLELIGLLI).

The protein belongs to the dicarboxylate/amino acid:cation symporter (DAACS) (TC 2.A.23) family.

Its subcellular location is the cell membrane. This is an uncharacterized protein from Haemophilus influenzae (strain ATCC 51907 / DSM 11121 / KW20 / Rd).